We begin with the raw amino-acid sequence, 276 residues long: METLELQGAKLRYHQVGQGPVLIFIPGANGTGDIFLPLAEQLKDHFTVVAVDRRDYGESELTEPLPDSASNPDSDYRVKRDAQDIAELAKSLSDEPVYILGSSSGSIVAMHVLKDYPEVVKKIAFHEPPINTFLPDSTYWKDKNDDIVHQILTEGLEKGMKTFGETLNIAPIDAKMMSQPADTEEGRIEQYKRTMFWLEFEIRQYTHSNITLDDFTKYSDKITLLNGTDSRGSFPQDVNFYINKETGIPIVDIPGGHLGYIQKPEGFADVLLNMWG.

The 118-residue stretch at 20-137 (PVLIFIPGAN…PPINTFLPDS (118 aa)) folds into the AB hydrolase-1 domain. Residues 57 to 76 (GESELTEPLPDSASNPDSDY) form a disordered region.

It belongs to the AB hydrolase superfamily.

This is an uncharacterized protein from Staphylococcus aureus (strain USA300).